The primary structure comprises 125 residues: MIHGIGTDIVQIERVQRSLDRHGARFAARILAASERDGFAASRDPARFLAKRFAAKEAFGKALGTGVAIPATLHAVAVDHDERGKPLYCYGTALAGFLAERGLSAHLSLTDEVDYVVAFALIEKR.

The Mg(2+) site is built by aspartate 8 and glutamate 57.

Belongs to the P-Pant transferase superfamily. AcpS family. Requires Mg(2+) as cofactor.

The protein resides in the cytoplasm. The catalysed reaction is apo-[ACP] + CoA = holo-[ACP] + adenosine 3',5'-bisphosphate + H(+). In terms of biological role, transfers the 4'-phosphopantetheine moiety from coenzyme A to a Ser of acyl-carrier-protein. The protein is Holo-[acyl-carrier-protein] synthase of Aromatoleum aromaticum (strain DSM 19018 / LMG 30748 / EbN1) (Azoarcus sp. (strain EbN1)).